We begin with the raw amino-acid sequence, 151 residues long: D-aminoacyl-tRNA deacylase (151 aa).

The Gly-cisPro motif, important for rejection of L-amino acids signature appears at 138-139; it reads GP.

This sequence belongs to the DTD family. Homodimer.

The protein resides in the cytoplasm. The catalysed reaction is glycyl-tRNA(Ala) + H2O = tRNA(Ala) + glycine + H(+). The enzyme catalyses a D-aminoacyl-tRNA + H2O = a tRNA + a D-alpha-amino acid + H(+). Its function is as follows. An aminoacyl-tRNA editing enzyme that deacylates mischarged D-aminoacyl-tRNAs. Also deacylates mischarged glycyl-tRNA(Ala), protecting cells against glycine mischarging by AlaRS. Acts via tRNA-based rather than protein-based catalysis; rejects L-amino acids rather than detecting D-amino acids in the active site. By recycling D-aminoacyl-tRNA to D-amino acids and free tRNA molecules, this enzyme counteracts the toxicity associated with the formation of D-aminoacyl-tRNA entities in vivo and helps enforce protein L-homochirality. The chain is D-aminoacyl-tRNA deacylase from Magnetococcus marinus (strain ATCC BAA-1437 / JCM 17883 / MC-1).